A 220-amino-acid chain; its full sequence is Translation initiation factor 6 (220 aa).

Belongs to the eIF-6 family.

In terms of biological role, binds to the 50S ribosomal subunit and prevents its association with the 30S ribosomal subunit to form the 70S initiation complex. The protein is Translation initiation factor 6 of Methanoculleus marisnigri (strain ATCC 35101 / DSM 1498 / JR1).